Here is a 238-residue protein sequence, read N- to C-terminus: Ribonuclease PH (238 aa).

Phosphate contacts are provided by residues Arg-86 and 124 to 126 (GTR).

This sequence belongs to the RNase PH family. Homohexameric ring arranged as a trimer of dimers.

It catalyses the reaction tRNA(n+1) + phosphate = tRNA(n) + a ribonucleoside 5'-diphosphate. Phosphorolytic 3'-5' exoribonuclease that plays an important role in tRNA 3'-end maturation. Removes nucleotide residues following the 3'-CCA terminus of tRNAs; can also add nucleotides to the ends of RNA molecules by using nucleoside diphosphates as substrates, but this may not be physiologically important. Probably plays a role in initiation of 16S rRNA degradation (leading to ribosome degradation) during starvation. This is Ribonuclease PH from Mannheimia haemolytica (Pasteurella haemolytica).